The following is a 230-amino-acid chain: Demethylmenaquinone methyltransferase (230 aa).

S-adenosyl-L-methionine is bound by residues Thr-62, Asp-80, 100-101, and Ser-117; that span reads DA.

This sequence belongs to the class I-like SAM-binding methyltransferase superfamily. MenG/UbiE family.

It carries out the reaction a 2-demethylmenaquinol + S-adenosyl-L-methionine = a menaquinol + S-adenosyl-L-homocysteine + H(+). It participates in quinol/quinone metabolism; menaquinone biosynthesis; menaquinol from 1,4-dihydroxy-2-naphthoate: step 2/2. Its function is as follows. Methyltransferase required for the conversion of demethylmenaquinol (DMKH2) to menaquinol (MKH2). In Mycobacterium sp. (strain JLS), this protein is Demethylmenaquinone methyltransferase.